Here is a 332-residue protein sequence, read N- to C-terminus: NAD-dependent protein deacetylase hst2 (332 aa).

In terms of domain architecture, Deacetylase sirtuin-type spans 7-269; sequence KHVDSSKHLE…RALCKLLGWS (263 aa). Residues 35–55 and 118–121 contribute to the NAD(+) site; these read GAGISTAAGIPDFRSPETGIY and QNID. The Proton acceptor role is filled by His-138. Positions 146, 149, 170, and 173 each coordinate Zn(2+). NAD(+)-binding positions include 210–212, 235–237, and Cys-255; these read GTS and NRE.

The protein belongs to the sirtuin family. Class I subfamily. The cofactor is Zn(2+).

The protein localises to the cytoplasm. It is found in the nucleus. It catalyses the reaction N(6)-acetyl-L-lysyl-[protein] + NAD(+) + H2O = 2''-O-acetyl-ADP-D-ribose + nicotinamide + L-lysyl-[protein]. Its function is as follows. NAD-dependent histone deacetylase, which could function in telomeric silencing, cell cycle progression and chromosome stability. The sequence is that of NAD-dependent protein deacetylase hst2 (hst2) from Schizosaccharomyces pombe (strain 972 / ATCC 24843) (Fission yeast).